A 485-amino-acid chain; its full sequence is Glycogen synthase (485 aa).

K15 contributes to the ADP-alpha-D-glucose binding site.

It belongs to the glycosyltransferase 1 family. Bacterial/plant glycogen synthase subfamily.

The catalysed reaction is [(1-&gt;4)-alpha-D-glucosyl](n) + ADP-alpha-D-glucose = [(1-&gt;4)-alpha-D-glucosyl](n+1) + ADP + H(+). It functions in the pathway glycan biosynthesis; glycogen biosynthesis. In terms of biological role, synthesizes alpha-1,4-glucan chains using ADP-glucose. This chain is Glycogen synthase, found in Rhodospirillum rubrum (strain ATCC 11170 / ATH 1.1.1 / DSM 467 / LMG 4362 / NCIMB 8255 / S1).